Reading from the N-terminus, the 291-residue chain is Protein/nucleic acid deglycase HchA (291 aa).

Residues 1–18 are compositionally biased toward basic and acidic residues; sequence MSNERDTSRTPTPDHAEH. The interval 1-20 is disordered; that stretch reads MSNERDTSRTPTPDHAEHNA. Cysteine 188 (nucleophile) is an active-site residue.

It belongs to the peptidase C56 family. HchA subfamily.

It is found in the cytoplasm. The enzyme catalyses N(omega)-(1-hydroxy-2-oxopropyl)-L-arginyl-[protein] + H2O = lactate + L-arginyl-[protein] + H(+). The catalysed reaction is N(6)-(1-hydroxy-2-oxopropyl)-L-lysyl-[protein] + H2O = lactate + L-lysyl-[protein] + H(+). It catalyses the reaction S-(1-hydroxy-2-oxopropyl)-L-cysteinyl-[protein] + H2O = lactate + L-cysteinyl-[protein] + H(+). It carries out the reaction N(omega)-(1-hydroxy-2-oxoethyl)-L-arginyl-[protein] + H2O = L-arginyl-[protein] + glycolate + H(+). The enzyme catalyses N(6)-(1-hydroxy-2-oxoethyl)-L-lysyl-[protein] + H2O = glycolate + L-lysyl-[protein] + H(+). The catalysed reaction is S-(1-hydroxy-2-oxoethyl)-L-cysteinyl-[protein] + H2O = glycolate + L-cysteinyl-[protein] + H(+). It catalyses the reaction N(2)-(1-hydroxy-2-oxopropyl)-dGTP + H2O = lactate + dGTP + H(+). It carries out the reaction N(2)-(1-hydroxy-2-oxopropyl)-GTP + H2O = lactate + GTP + H(+). The enzyme catalyses N(2)-(1-hydroxy-2-oxopropyl)-GDP + H2O = lactate + GDP + H(+). The catalysed reaction is N(2)-(1-hydroxy-2-oxopropyl)-GMP + H2O = lactate + GMP + H(+). It catalyses the reaction N(2)-(1-hydroxy-2-oxoethyl)-dGTP + H2O = dGTP + glycolate + H(+). It carries out the reaction N(2)-(1-hydroxy-2-oxoethyl)-GTP + H2O = glycolate + GTP + H(+). The enzyme catalyses N(2)-(1-hydroxy-2-oxoethyl)-GDP + H2O = glycolate + GDP + H(+). The catalysed reaction is N(2)-(1-hydroxy-2-oxoethyl)-GMP + H2O = glycolate + GMP + H(+). It catalyses the reaction an N(2)-(1-hydroxy-2-oxopropyl)-guanosine in RNA + H2O = a guanosine in RNA + lactate + H(+). It carries out the reaction an N(2)-(1-hydroxy-2-oxopropyl)-2'-deoxyguanosine in DNA + H2O = a 2'-deoxyguanosine in DNA + lactate + H(+). The enzyme catalyses an N(2)-(1-hydroxy-2-oxoethyl)-guanosine in RNA + H2O = a guanosine in RNA + glycolate + H(+). The catalysed reaction is an N(2)-(1-hydroxy-2-oxoethyl)-2'-deoxyguanosine in DNA + H2O = a 2'-deoxyguanosine in DNA + glycolate + H(+). Its function is as follows. Protein and nucleotide deglycase that catalyzes the deglycation of the Maillard adducts formed between amino groups of proteins or nucleotides and reactive carbonyl groups of glyoxals. Thus, functions as a protein deglycase that repairs methylglyoxal- and glyoxal-glycated proteins, and releases repaired proteins and lactate or glycolate, respectively. Deglycates cysteine, arginine and lysine residues in proteins, and thus reactivates these proteins by reversing glycation by glyoxals. Acts on early glycation intermediates (hemithioacetals and aminocarbinols), preventing the formation of Schiff bases and advanced glycation endproducts (AGE). Also functions as a nucleotide deglycase able to repair glycated guanine in the free nucleotide pool (GTP, GDP, GMP, dGTP) and in DNA and RNA. Is thus involved in a major nucleotide repair system named guanine glycation repair (GG repair), dedicated to reversing methylglyoxal and glyoxal damage via nucleotide sanitization and direct nucleic acid repair. Plays an important role in protecting cells from carbonyl stress. The chain is Protein/nucleic acid deglycase HchA from Pseudomonas aeruginosa (strain LESB58).